Consider the following 75-residue polypeptide: Acyl carrier protein (75 aa).

In terms of domain architecture, Carrier spans 1 to 75 (MIFEKVRDII…DVVEYLSNLE (75 aa)). Ser35 is subject to O-(pantetheine 4'-phosphoryl)serine.

The protein belongs to the acyl carrier protein (ACP) family. 4'-phosphopantetheine is transferred from CoA to a specific serine of apo-ACP by AcpS. This modification is essential for activity because fatty acids are bound in thioester linkage to the sulfhydryl of the prosthetic group.

Its subcellular location is the cytoplasm. It functions in the pathway lipid metabolism; fatty acid biosynthesis. In terms of biological role, carrier of the growing fatty acid chain in fatty acid biosynthesis. This chain is Acyl carrier protein, found in Thermoanaerobacter pseudethanolicus (strain ATCC 33223 / 39E) (Clostridium thermohydrosulfuricum).